Here is a 303-residue protein sequence, read N- to C-terminus: Putative 1-phosphofructokinase (303 aa).

ATP-binding positions include 217–222 and 249–250; these read SDGDKG and GD. Asp-250 serves as the catalytic Proton acceptor.

This sequence belongs to the carbohydrate kinase PfkB family.

It catalyses the reaction beta-D-fructose 1-phosphate + ATP = beta-D-fructose 1,6-bisphosphate + ADP + H(+). Functionally, catalyzes the ATP-dependent phosphorylation of fructose-l-phosphate to fructose-l,6-bisphosphate. In Mycoplasma genitalium (strain ATCC 33530 / DSM 19775 / NCTC 10195 / G37) (Mycoplasmoides genitalium), this protein is Putative 1-phosphofructokinase (fruK).